Consider the following 439-residue polypeptide: ATP-dependent RNA helicase SrmB (439 aa).

Residues 4–32 carry the Q motif motif; the sequence is SQFEQFDLSPELLKALEKKGYSRPTAIQM. The Helicase ATP-binding domain occupies 35 to 209; the sequence is IPAAMEESDV…AERLLNDPVK (175 aa). Residue 48–55 participates in ATP binding; the sequence is APTGTGKT. The DEAD box signature appears at 157–160; that stretch reads DEAD. Positions 237-387 constitute a Helicase C-terminal domain; the sequence is KLLARFIETE…GLEPRTKPPK (151 aa). Positions 381-393 are enriched in basic and acidic residues; the sequence is PRTKPPKDGEVKS. A disordered region spans residues 381–439; the sequence is PRTKPPKDGEVKSVSKKQKARIKEKREEKKKTEAKKKVKLRHKDTKNIGKRRKPSNSNV. Basic residues-rich tracts occupy residues 394 to 403 and 412 to 439; these read VSKKQKARIK and TEAKKKVKLRHKDTKNIGKRRKPSNSNV.

It belongs to the DEAD box helicase family. SrmB subfamily. In terms of assembly, interacts with the 50S ribosomal subunit.

The protein resides in the cytoplasm. It catalyses the reaction ATP + H2O = ADP + phosphate + H(+). Its function is as follows. DEAD-box RNA helicase involved in the assembly of the 50S ribosomal subunit at low temperature. Exhibits RNA-stimulated ATP hydrolysis and RNA unwinding activity. The polypeptide is ATP-dependent RNA helicase SrmB (Haemophilus influenzae (strain ATCC 51907 / DSM 11121 / KW20 / Rd)).